A 247-amino-acid chain; its full sequence is Small ribosomal subunit protein uS2 (247 aa).

It belongs to the universal ribosomal protein uS2 family.

The chain is Small ribosomal subunit protein uS2 from Fusobacterium nucleatum subsp. nucleatum (strain ATCC 25586 / DSM 15643 / BCRC 10681 / CIP 101130 / JCM 8532 / KCTC 2640 / LMG 13131 / VPI 4355).